Reading from the N-terminus, the 65-residue chain is Large ribosomal subunit protein bL35 (65 aa).

Residues 1–65 (MQKIKTNRSA…KELKRLLPGM (65 aa)) are disordered. 2 stretches are compositionally biased toward basic residues: residues 10–19 (AAKRFKRTKS) and 33–47 (LTKKNRKRKRSLRKS). Positions 54-65 (NNKELKRLLPGM) are enriched in basic and acidic residues.

It belongs to the bacterial ribosomal protein bL35 family.

The polypeptide is Large ribosomal subunit protein bL35 (Desulfosudis oleivorans (strain DSM 6200 / JCM 39069 / Hxd3) (Desulfococcus oleovorans)).